The primary structure comprises 251 residues: FHA domain-containing protein FHA1 (251 aa).

An FHA domain is found at Ile32–His89. Residues Glu163–Asp174 are compositionally biased toward acidic residues. Residues Glu163–Asp209 form a disordered region. The segment covering Thr182–Arg206 has biased composition (basic and acidic residues).

Expressed in roots and vascular tissues near the shoot apex in young seedlings.

The protein resides in the nucleus. In terms of biological role, may play a role in the control of plant organ development. Does not show transactivation activity in yeast. This is FHA domain-containing protein FHA1 from Arabidopsis thaliana (Mouse-ear cress).